We begin with the raw amino-acid sequence, 301 residues long: Phosphoribosylaminoimidazole-succinocarboxamide synthase (301 aa).

This sequence belongs to the SAICAR synthetase family.

The enzyme catalyses 5-amino-1-(5-phospho-D-ribosyl)imidazole-4-carboxylate + L-aspartate + ATP = (2S)-2-[5-amino-1-(5-phospho-beta-D-ribosyl)imidazole-4-carboxamido]succinate + ADP + phosphate + 2 H(+). It participates in purine metabolism; IMP biosynthesis via de novo pathway; 5-amino-1-(5-phospho-D-ribosyl)imidazole-4-carboxamide from 5-amino-1-(5-phospho-D-ribosyl)imidazole-4-carboxylate: step 1/2. In Syntrophobacter fumaroxidans (strain DSM 10017 / MPOB), this protein is Phosphoribosylaminoimidazole-succinocarboxamide synthase.